The primary structure comprises 319 residues: Mercury resistance probable Hg transport protein (319 aa).

Residues Cys298, Cys299, Cys318, and Cys319 each contribute to the Hg(2+) site.

This chain is Mercury resistance probable Hg transport protein, found in Streptomyces lividans.